Reading from the N-terminus, the 348-residue chain is Succinylglutamate desuccinylase (348 aa).

Zn(2+)-binding residues include H64, E67, and H164. Residue E228 is part of the active site.

Belongs to the AspA/AstE family. Succinylglutamate desuccinylase subfamily. It depends on Zn(2+) as a cofactor.

The catalysed reaction is N-succinyl-L-glutamate + H2O = L-glutamate + succinate. The protein operates within amino-acid degradation; L-arginine degradation via AST pathway; L-glutamate and succinate from L-arginine: step 5/5. Functionally, transforms N(2)-succinylglutamate into succinate and glutamate. The protein is Succinylglutamate desuccinylase of Shewanella amazonensis (strain ATCC BAA-1098 / SB2B).